The sequence spans 111 residues: Anti-adapter protein IraM (111 aa).

It belongs to the IraM/RssC family.

It is found in the cytoplasm. Involved in the stabilization of the sigma stress factor RpoS. In Cronobacter sakazakii (strain ATCC BAA-894) (Enterobacter sakazakii), this protein is Anti-adapter protein IraM.